The primary structure comprises 380 residues: Carbamoyl phosphate synthase small chain (380 aa).

Positions 1-184 are CPSase; that stretch reads MTTSTRGAHR…EAYVVPAIGE (184 aa). L-glutamine contacts are provided by Ser-55, Gly-236, and Gly-238. One can recognise a Glutamine amidotransferase type-1 domain in the interval 188–380; the sequence is TVAAVDLGIK…FVNLMEGQRA (193 aa). Cys-264 acts as the Nucleophile in catalysis. L-glutamine-binding residues include Phe-265, Gln-268, Asn-306, Gly-308, and Phe-309. Residues His-354 and Glu-356 contribute to the active site.

Belongs to the CarA family. Composed of two chains; the small (or glutamine) chain promotes the hydrolysis of glutamine to ammonia, which is used by the large (or ammonia) chain to synthesize carbamoyl phosphate. Tetramer of heterodimers (alpha,beta)4.

It carries out the reaction hydrogencarbonate + L-glutamine + 2 ATP + H2O = carbamoyl phosphate + L-glutamate + 2 ADP + phosphate + 2 H(+). The enzyme catalyses L-glutamine + H2O = L-glutamate + NH4(+). Its pathway is amino-acid biosynthesis; L-arginine biosynthesis; carbamoyl phosphate from bicarbonate: step 1/1. It functions in the pathway pyrimidine metabolism; UMP biosynthesis via de novo pathway; (S)-dihydroorotate from bicarbonate: step 1/3. Small subunit of the glutamine-dependent carbamoyl phosphate synthetase (CPSase). CPSase catalyzes the formation of carbamoyl phosphate from the ammonia moiety of glutamine, carbonate, and phosphate donated by ATP, constituting the first step of 2 biosynthetic pathways, one leading to arginine and/or urea and the other to pyrimidine nucleotides. The small subunit (glutamine amidotransferase) binds and cleaves glutamine to supply the large subunit with the substrate ammonia. This is Carbamoyl phosphate synthase small chain from Streptomyces coelicolor (strain ATCC BAA-471 / A3(2) / M145).